The chain runs to 268 residues: Oxygen-evolving enhancer protein 2-1, chloroplastic (268 aa).

The N-terminal 82 residues, 1–82, are a transit peptide targeting the chloroplast; that stretch reads MASTQCFLHQ…IGSKVSPADA (82 aa).

Belongs to the PsbP family.

It localises to the plastid. Its subcellular location is the chloroplast thylakoid membrane. May be involved in the regulation of photosystem II. In Nicotiana tabacum (Common tobacco), this protein is Oxygen-evolving enhancer protein 2-1, chloroplastic (PSBP1).